The chain runs to 280 residues: Large ribosomal subunit protein uL2 (280 aa).

The disordered stretch occupies residues 213–280; that stretch reads RWKGKRPSVR…RRRTGKKHAR (68 aa). Residues 268–280 are compositionally biased toward basic residues; sequence IVRRRRTGKKHAR.

Belongs to the universal ribosomal protein uL2 family. Part of the 50S ribosomal subunit. Forms a bridge to the 30S subunit in the 70S ribosome.

Its function is as follows. One of the primary rRNA binding proteins. Required for association of the 30S and 50S subunits to form the 70S ribosome, for tRNA binding and peptide bond formation. It has been suggested to have peptidyltransferase activity; this is somewhat controversial. Makes several contacts with the 16S rRNA in the 70S ribosome. This chain is Large ribosomal subunit protein uL2, found in Mycobacterium leprae (strain Br4923).